We begin with the raw amino-acid sequence, 231 residues long: Orotidine 5'-phosphate decarboxylase (231 aa).

Residues D11, K33, D60 to T69, T120, R181, Q190, G210, and R211 each bind substrate. The Proton donor role is filled by K62.

Belongs to the OMP decarboxylase family. Type 1 subfamily. As to quaternary structure, homodimer.

The enzyme catalyses orotidine 5'-phosphate + H(+) = UMP + CO2. It participates in pyrimidine metabolism; UMP biosynthesis via de novo pathway; UMP from orotate: step 2/2. Functionally, catalyzes the decarboxylation of orotidine 5'-monophosphate (OMP) to uridine 5'-monophosphate (UMP). This chain is Orotidine 5'-phosphate decarboxylase, found in Pseudoalteromonas atlantica (strain T6c / ATCC BAA-1087).